The primary structure comprises 415 residues: Putative O-antigen transporter (415 aa).

Topologically, residues 1 to 11 are cytoplasmic; the sequence is MNTNKLSLRRN. A helical transmembrane segment spans residues 12 to 32; that stretch reads VIYLAVVQGSNYLLPLLTFPY. At 33–41 the chain is on the periplasmic side; it reads LVRTLGPEN. The chain crosses the membrane as a helical span at residues 42–62; sequence FGIFGFCQATMLYMIMFVEYG. The Cytoplasmic segment spans residues 63-83; it reads FNLTATQSIAKAADSKDKVTS. A helical membrane pass occupies residues 84–104; it reads IFWAVIFSKIVLIVITLIFLT. Residues 105-117 lie on the Periplasmic side of the membrane; that stretch reads SMTLLVPEYNKHA. A helical membrane pass occupies residues 118 to 138; that stretch reads VIIWSFVPALVGNLIYPIWLF. The Cytoplasmic portion of the chain corresponds to 139-173; it reads QGKEKMKWLTLSSILSRLAIIPLTFIFVNTKSDIA. Residues 174–194 traverse the membrane as a helical segment; sequence IAGFIQSSANLVAGIIALAIV. Residues 195–220 lie on the Periplasmic side of the membrane; sequence VHEGWIGKVTLSLHNVRRSLADGFHV. The chain crosses the membrane as a helical span at residues 221–241; that stretch reads FISTSAISLYSTGIVIILGFI. The Cytoplasmic segment spans residues 242-295; the sequence is SGPTSVGNFNAANTIRNALQGLLNPITQAIYPRISSTLVLNRVKGVILIKKSLT. The chain crosses the membrane as a helical span at residues 296 to 316; the sequence is CLSLIGGAFSLILLLGASILV. At 317-328 the chain is on the periplasmic side; sequence KISIGPGYDNAV. A helical membrane pass occupies residues 329–349; that stretch reads IVLMIISPLPFLISLSNVYGI. Over 350 to 362 the chain is Cytoplasmic; that stretch reads QVMLTHNYKKEFS. The chain crosses the membrane as a helical span at residues 363–383; sequence KILIAAGLLSLLLIFPLTTLF. The Periplasmic segment spans residues 384-385; it reads KE. Residues 386–406 form a helical membrane-spanning segment; it reads IGAAITLLATECLVTSLMLMF. Topologically, residues 407–415 are cytoplasmic; sequence VRNNKLLVC.

Belongs to the polysaccharide synthase family.

It localises to the cell inner membrane. Its pathway is bacterial outer membrane biogenesis; LPS O-antigen biosynthesis. Functionally, may be involved in the translocation process of the nascent O-polysaccharide molecules and/or its ligation to lipid A core units. This Escherichia coli (strain K12) protein is Putative O-antigen transporter (rfbX).